A 195-amino-acid polypeptide reads, in one-letter code: Small ribosomal subunit protein uS10c (195 aa).

Residues 1-59 (MATSSISAALLSPLTLRNASSSSTKQDFSTLSSLNLRRTLTPTLQSGHTLSNSSNFATF) constitute a chloroplast transit peptide.

Belongs to the universal ribosomal protein uS10 family. In terms of assembly, component of the chloroplast small ribosomal subunit (SSU). Mature 70S chloroplast ribosomes of higher plants consist of a small (30S) and a large (50S) subunit. The 30S small subunit contains 1 molecule of ribosomal RNA (16S rRNA) and 24 different proteins. The 50S large subunit contains 3 rRNA molecules (23S, 5S and 4.5S rRNA) and 33 different proteins.

The protein localises to the plastid. It is found in the chloroplast. In terms of biological role, component of the chloroplast ribosome (chloro-ribosome), a dedicated translation machinery responsible for the synthesis of chloroplast genome-encoded proteins, including proteins of the transcription and translation machinery and components of the photosynthetic apparatus. This chain is Small ribosomal subunit protein uS10c (RPS10), found in Spinacia oleracea (Spinach).